A 292-amino-acid chain; its full sequence is Elongation factor Ts (292 aa).

Residues 79-82 are involved in Mg(2+) ion dislocation from EF-Tu; that stretch reads TDFV.

This sequence belongs to the EF-Ts family.

It is found in the cytoplasm. In terms of biological role, associates with the EF-Tu.GDP complex and induces the exchange of GDP to GTP. It remains bound to the aminoacyl-tRNA.EF-Tu.GTP complex up to the GTP hydrolysis stage on the ribosome. In Xylella fastidiosa (strain Temecula1 / ATCC 700964), this protein is Elongation factor Ts.